Reading from the N-terminus, the 481-residue chain is Replication factor C large subunit (481 aa).

43–50 is an ATP binding site; the sequence is GKPGIGKT. Basic and acidic residues-rich tracts occupy residues 408–433 and 441–457; these read KVER…KDAD and VPKE…ERPA. A disordered region spans residues 408–481; sequence KVEREKEPEP…HNQSTLFDGF (74 aa). A compositionally biased stretch (polar residues) spans 471–481; the sequence is AHNQSTLFDGF.

Belongs to the activator 1 small subunits family. RfcL subfamily. Heteromultimer composed of small subunits (RfcS) and large subunits (RfcL).

Its function is as follows. Part of the RFC clamp loader complex which loads the PCNA sliding clamp onto DNA. This Methanoregula boonei (strain DSM 21154 / JCM 14090 / 6A8) protein is Replication factor C large subunit.